The following is a 495-amino-acid chain: L-arabinose isomerase (495 aa).

The Mn(2+) site is built by Glu-305, Glu-332, His-349, and His-448.

It belongs to the arabinose isomerase family. Mn(2+) is required as a cofactor.

It catalyses the reaction beta-L-arabinopyranose = L-ribulose. The protein operates within carbohydrate degradation; L-arabinose degradation via L-ribulose; D-xylulose 5-phosphate from L-arabinose (bacterial route): step 1/3. Its function is as follows. Catalyzes the conversion of L-arabinose to L-ribulose. This is L-arabinose isomerase from Mannheimia succiniciproducens (strain KCTC 0769BP / MBEL55E).